The primary structure comprises 287 residues: tRNA selenocysteine 1-associated protein 1 (287 aa).

RRM domains lie at 3–86 (ASLW…YATY) and 96–175 (YSLF…VAIP).

This sequence belongs to the RRM TRSPAP family. In terms of assembly, component of the tRNA(Sec) complex composed at least of EEFSEC, SECISBP2, SEPHS1, SEPSECS, TRNAU1AP and tRNA(Sec). Found in a complex with tRNA(Sec). Interacts with SEPSECS. Associates with mRNP and/or polysomes. Found in a complex with EEFSEC, SECISBP2, TRNAU1AP and tRNA(Sec).

Its subcellular location is the nucleus. It is found in the cytoplasm. In terms of biological role, involved in the early steps of selenocysteine biosynthesis and tRNA(Sec) charging to the later steps resulting in the cotranslational incorporation of selenocysteine into selenoproteins. Stabilizes the SECISBP2, EEFSEC and tRNA(Sec) complex. May be involved in the methylation of tRNA(Sec). Enhances efficiency of selenoproteins synthesis. In Homo sapiens (Human), this protein is tRNA selenocysteine 1-associated protein 1 (TRNAU1AP).